Here is a 1044-residue protein sequence, read N- to C-terminus: Ras GTPase-activating protein 1 (1044 aa).

M1 bears the N-acetylmethionine mark. The hydrophobic stretch occupies residues 1–160; the sequence is MMAAEAGGEE…DEGDSLDGPE (160 aa). An SH2 1 domain is found at 178 to 269; that stretch reads WYHGKLDRTI…LKGEKLLYPV (92 aa). One can recognise an SH3 domain in the interval 276–338; that stretch reads EDRRRVRAIL…VEDLVEEVGR (63 aa). One can recognise an SH2 2 domain in the interval 348–438; the sequence is WFHGKISKQE…VEGYYLKEPV (91 aa). The 104-residue stretch at 471-574 folds into the PH domain; sequence NIVKKGYLLK…WMKGLQAFCN (104 aa). Residues 574 to 687 enclose the C2 domain; it reads NLRKSSPGTS…QKGHATDEWF (114 aa). Y612 carries the phosphotyrosine modification. 2 repeats span residues 646 to 664 and 665 to 683; these read PDINRFEITLSNKTKKSKD and PDILFMRCQLSRLQKGHAT. Positions 761–971 constitute a Ras-GAP domain; that stretch reads KLESLLLCTL…HRMIMFLDEL (211 aa). Position 828 is a phosphoserine (S828).

Interacts with SQSTM1. Interacts with SPSB1; the interaction does not promote degradation. Interacts with CAV2 (tyrosine phosphorylated form). Directly interacts with NCK1. Interacts with PDGFRB (tyrosine phosphorylated). Interacts (via SH2 domain) with the 'Tyr-9' phosphorylated form of PDPK1. Interacts with tyrosine-phosphorylated EPHB4. Post-translationally, phosphorylated by SRC and LCK. The phosphorylation SRC inhibits its ability to stimulate the Ras-GTPase activity, whereas phosphorylation by LCK does not display any effect on stimulation activity.

The protein localises to the cytoplasm. Inhibitory regulator of the Ras-cyclic AMP pathway. Stimulates the GTPase of normal but not oncogenic Ras p21. The protein is Ras GTPase-activating protein 1 (RASA1) of Bos taurus (Bovine).